We begin with the raw amino-acid sequence, 290 residues long: 4-hydroxy-3-methylbut-2-enyl diphosphate reductase (290 aa).

[4Fe-4S] cluster is bound at residue Cys-12. 2 residues coordinate (2E)-4-hydroxy-3-methylbut-2-enyl diphosphate: His-50 and His-83. The dimethylallyl diphosphate site is built by His-50 and His-83. The isopentenyl diphosphate site is built by His-50 and His-83. A [4Fe-4S] cluster-binding site is contributed by Cys-105. His-133 contacts (2E)-4-hydroxy-3-methylbut-2-enyl diphosphate. His-133 provides a ligand contact to dimethylallyl diphosphate. His-133 contributes to the isopentenyl diphosphate binding site. Glu-135 functions as the Proton donor in the catalytic mechanism. Position 173 (Thr-173) interacts with (2E)-4-hydroxy-3-methylbut-2-enyl diphosphate. Cys-202 provides a ligand contact to [4Fe-4S] cluster. Positions 230, 232, and 274 each coordinate (2E)-4-hydroxy-3-methylbut-2-enyl diphosphate. The dimethylallyl diphosphate site is built by Ser-230, Asn-232, and Ser-274. Residues Ser-230, Asn-232, and Ser-274 each coordinate isopentenyl diphosphate.

This sequence belongs to the IspH family. [4Fe-4S] cluster serves as cofactor.

The enzyme catalyses isopentenyl diphosphate + 2 oxidized [2Fe-2S]-[ferredoxin] + H2O = (2E)-4-hydroxy-3-methylbut-2-enyl diphosphate + 2 reduced [2Fe-2S]-[ferredoxin] + 2 H(+). It carries out the reaction dimethylallyl diphosphate + 2 oxidized [2Fe-2S]-[ferredoxin] + H2O = (2E)-4-hydroxy-3-methylbut-2-enyl diphosphate + 2 reduced [2Fe-2S]-[ferredoxin] + 2 H(+). Its pathway is isoprenoid biosynthesis; dimethylallyl diphosphate biosynthesis; dimethylallyl diphosphate from (2E)-4-hydroxy-3-methylbutenyl diphosphate: step 1/1. The protein operates within isoprenoid biosynthesis; isopentenyl diphosphate biosynthesis via DXP pathway; isopentenyl diphosphate from 1-deoxy-D-xylulose 5-phosphate: step 6/6. In terms of biological role, catalyzes the conversion of 1-hydroxy-2-methyl-2-(E)-butenyl 4-diphosphate (HMBPP) into a mixture of isopentenyl diphosphate (IPP) and dimethylallyl diphosphate (DMAPP). Acts in the terminal step of the DOXP/MEP pathway for isoprenoid precursor biosynthesis. This is 4-hydroxy-3-methylbut-2-enyl diphosphate reductase from Nitratidesulfovibrio vulgaris (strain DP4) (Desulfovibrio vulgaris).